A 548-amino-acid chain; its full sequence is Chaperonin GroEL (548 aa).

Residues 30 to 33 (TLGP), Lys-51, 87 to 91 (DGTTT), Gly-415, 479 to 481 (NAA), and Asp-495 each bind ATP. Positions 525 to 548 (PKEDKTSDASSSPAGGMGGMGGMM) are disordered. Residues 539-548 (GGMGGMGGMM) show a composition bias toward gly residues.

It belongs to the chaperonin (HSP60) family. Forms a cylinder of 14 subunits composed of two heptameric rings stacked back-to-back. Interacts with the co-chaperonin GroES.

The protein localises to the cytoplasm. It carries out the reaction ATP + H2O + a folded polypeptide = ADP + phosphate + an unfolded polypeptide.. Together with its co-chaperonin GroES, plays an essential role in assisting protein folding. The GroEL-GroES system forms a nano-cage that allows encapsulation of the non-native substrate proteins and provides a physical environment optimized to promote and accelerate protein folding. The chain is Chaperonin GroEL from Buchnera aphidicola subsp. Rhopalosiphum padi.